A 205-amino-acid chain; its full sequence is MPELQTVDPKVSRAKFDREISRFRAYADAYRMQGCFLIEESFPSAFFIFASPKVKPRVIGAAIEIDFTNYDLRPLSVVFVDPFTRQPIARKDLPLNMLRRPQLPGTPTEMISNLIQQNAVSLTDFIQANSLEDQPFLCMAGVREYHDNPAHSGDPWLLHRGSGEGCLAFILDKIIKYGTGPAEQLQIHLQVALGGLLVPPQAIPE.

This is an uncharacterized protein from Sinorhizobium fredii (strain NBRC 101917 / NGR234).